Consider the following 74-residue polypeptide: Protein SlyX homolog (74 aa).

The protein belongs to the SlyX family.

The protein is Protein SlyX homolog of Neisseria meningitidis serogroup C (strain 053442).